A 272-amino-acid polypeptide reads, in one-letter code: Type III pantothenate kinase (272 aa).

An ATP-binding site is contributed by 6-13 (DVRNTHTV). 109–112 (GADR) serves as a coordination point for substrate. The Proton acceptor role is filled by Asp111. Asp131 contacts K(+). Ser134 provides a ligand contact to ATP. Thr186 serves as a coordination point for substrate.

It belongs to the type III pantothenate kinase family. As to quaternary structure, homodimer. The cofactor is NH4(+). K(+) serves as cofactor.

The protein localises to the cytoplasm. It catalyses the reaction (R)-pantothenate + ATP = (R)-4'-phosphopantothenate + ADP + H(+). The protein operates within cofactor biosynthesis; coenzyme A biosynthesis; CoA from (R)-pantothenate: step 1/5. Functionally, catalyzes the phosphorylation of pantothenate (Pan), the first step in CoA biosynthesis. This is Type III pantothenate kinase from Mycobacterium ulcerans (strain Agy99).